A 130-amino-acid polypeptide reads, in one-letter code: Iron-sulfur cluster insertion protein ErpA (130 aa).

Positions 46, 116, and 118 each coordinate iron-sulfur cluster.

It belongs to the HesB/IscA family. As to quaternary structure, homodimer. The cofactor is iron-sulfur cluster.

Required for insertion of 4Fe-4S clusters for at least IspG. The protein is Iron-sulfur cluster insertion protein ErpA of Legionella pneumophila subsp. pneumophila (strain Philadelphia 1 / ATCC 33152 / DSM 7513).